Reading from the N-terminus, the 829-residue chain is Protein roadkill (829 aa).

Low complexity-rich tracts occupy residues 24-36, 122-140, and 266-288; these read EQQQ…QQQQ, TPAA…QAAP, and SSSS…SSSS. Disordered stretches follow at residues 24–47, 106–142, 266–296, and 313–400; these read EQQQ…CCEN, SSLQ…APSV, SSSS…SHHS, and HLNQ…NQQQ. Positions 313 to 322 are enriched in basic residues; sequence HLNQQQHHHP. Low complexity-rich tracts occupy residues 323 to 353, 372 to 382, and 389 to 400; these read LSAS…QQQH, SSSSSSSSSSS, and SSSSSNSNNQQQ. The MATH domain occupies 486-616; the sequence is KFSYMWTINN…EDKLTIFCEV (131 aa). The BTB domain maps to 655-722; sequence SDVTLSVGGR…IYTGKAPNLE (68 aa).

Belongs to the Tdpoz family. As to quaternary structure, interacts with ci and gft/CUL3. Expressed near the anterio-posterior compartment boundary of antenna, leg and wing disks.

The protein resides in the nucleus. It functions in the pathway protein modification; protein ubiquitination. Functionally, involved in segment polarity. In complex with gft/CUL3, promotes ubiquitination of ci and its subsequent degradation by the proteasome, which results in hh signaling attenuation. This regulation may be important during eye formation for proper packing of ommatidia into a hexagonal array. This Drosophila melanogaster (Fruit fly) protein is Protein roadkill (rdx).